Reading from the N-terminus, the 198-residue chain is Ribosome maturation factor RimM (198 aa).

Residues 92–168 (DDEYYHADLI…IELPAEIEGE (77 aa)) enclose the PRC barrel domain. A compositionally biased stretch (acidic residues) spans 163-172 (AEIEGEDQDS). The tract at residues 163–198 (AEIEGEDQDSSDNAGSPEGDAAASNSARHPRESGDP) is disordered.

The protein belongs to the RimM family. As to quaternary structure, binds ribosomal protein uS19.

It is found in the cytoplasm. In terms of biological role, an accessory protein needed during the final step in the assembly of 30S ribosomal subunit, possibly for assembly of the head region. Essential for efficient processing of 16S rRNA. May be needed both before and after RbfA during the maturation of 16S rRNA. It has affinity for free ribosomal 30S subunits but not for 70S ribosomes. The sequence is that of Ribosome maturation factor RimM from Bradyrhizobium sp. (strain BTAi1 / ATCC BAA-1182).